The following is a 1842-amino-acid chain: Fatty acid synthase alpha subunit pigJ (1842 aa).

The interval 120–184 is disordered; sequence GAPVEEEGSK…TPAGGSTTPD (65 aa). Positions 140 to 175 are enriched in low complexity; the sequence is SGSSRTATTAKATVTTPSSSSPETAPPAASTPSQGT. A Carrier domain is found at 184-262; the sequence is DIPLSAKHVV…DALQGNFPGK (79 aa). O-(pantetheine 4'-phosphoryl)serine is present on Ser222. Positions 611 to 807 are beta-ketoacyl reductase; it reads GKTVLVTGAG…CGAAIGWVRG (197 aa). Positions 1058 to 1585 constitute a Ketosynthase family 3 (KS3) domain; sequence KEFLQEIVVE…QKGGIAVVVA (528 aa). Active-site for beta-ketoacyl synthase activity residues include Cys1244, His1470, and His1511. Residues 1649-1672 are disordered; that stretch reads KARVGGHPENNNNNNNNSSSKRNT. Positions 1658-1668 are enriched in low complexity; sequence NNNNNNNNSSS. Mg(2+)-binding residues include Asp1725, Val1726, and Glu1727. Acetyl-CoA-binding positions include 1725–1727, Ser1761, 1770–1780, and 1823–1825; these read DVE, EAVFKSLQTPS, and ITH. Mg(2+) contacts are provided by Thr1824 and His1825.

It belongs to the thiolase-like superfamily. Fungal fatty acid synthetase subunit alpha family. [Alpha(6)beta(6)] hexamers of two multifunctional subunits (alpha and beta).

It catalyses the reaction acetyl-CoA + n malonyl-CoA + 2n NADPH + 4n H(+) = a long-chain-acyl-CoA + n CoA + n CO2 + 2n NADP(+).. The enzyme catalyses a fatty acyl-[ACP] + malonyl-[ACP] + H(+) = a 3-oxoacyl-[ACP] + holo-[ACP] + CO2. It carries out the reaction a (3R)-hydroxyacyl-[ACP] + NADP(+) = a 3-oxoacyl-[ACP] + NADPH + H(+). The protein operates within secondary metabolite biosynthesis. Its function is as follows. Fatty acid synthase alpha subunit; part of the gene cluster that mediates the biosynthesis of azaphilone pigments (MonAzPs), a complex mixture of compounds with a common azaphilone skeleton very widely used as food colorants. PigJ and pigK form the two subunits of a dedicated fungal fatty acid synthase (FAS) that produces the side chain fatty acyl moiety of MonAzPs, a beta-keto fatty acid. The chain length control of the pigJ-pigK FAS is somewhat flexible as MonAzPs features either a beta-ketooctanoic or a beta-ketodecanoic acid moiety. The beta-ketoacyl-ACP probably serves as the substrate for the acetyltransferase pigD that directly transfers the fatty acyl chain to the C-4 alcohol of the pyran ring. The first step of the pathway is performed by the nrPKS pigA that forms the hexaketide precursor from successive condensations of five malonyl-CoA units, with a simple acetyl-CoA starter unit. The role of esterase pigG is not clear, but it may play at most a supplementary role in the formation of the benzaldehyde produced by the pigA nrPKS. This very reactive benzaldehyde is intercepted by the pigC ketoreductase that to provide the first stable enzyme-free MonAzPs intermediate, 6-(4-hydroxy-2-oxopentyl)-3-methyl-2,4-dioxocyclohexane carbaldehyde, also known as M7PKS-1. The FAD-dependent monooxygenase pigN hydroxylates M7PKS-1 at C-4, which triggers the formation of the pyran ring. PigJ, pigK and pigD are involved in the acetylation of the pyran ring. PigJ and pigK form the two subunits of a dedicated fungal FAS that produces the side chain fatty acyl moiety of MonAzPs and pigD transfers the fatty acyl chain to the C-4 alcohol. PigM and pigO are involved in the elimination of the omega-1 alcohol. PigM acts as an O-acetyltransferase that synthesizes the putative O-11 acetyl intermediate whereas pigO eliminates acetic acid to yield an intermediate with a C10(11) double bond. The dehydration of the C-11 alcohol followed by the reduction of the C6(7) double bond by the NAD(P)H-dependent oxidoreductase pigE increases the electrophilicity of the C-5 ketone of the resulting acyl benzopyran. This in turn sets up the C-5 ketone for an intramolecular Knoevenagel aldol condensation with the C-20 enol of the side chain. This condensation affords the characteristic linear tricyclic carbon skeletons of the yellow pigments that serve as the common precursors for the classical yellow pigments monascin and ankaflavin, orange pigments rubopunctatin and monascorubrin, and red pigments ribropunctamine and monascorubramine. The FAD-dependent oxidoreductase pigF is especially invoved in the biosynthesis of orange and red pigments via desaturation of C6(7). This is Fatty acid synthase alpha subunit pigJ from Monascus ruber (Mold).